Consider the following 99-residue polypeptide: Cysteine-rich C-terminal protein 1 (99 aa).

Disordered stretches follow at residues 1–42 (MSSQ…CCGS) and 65–99 (RRRRRQRSSGCCCCGGGSQRSQRSNNRSSGCCSGC). Positions 22–32 (APCPAPAPTPA) are enriched in pro residues. Residues 83–99 (QRSQRSNNRSSGCCSGC) show a composition bias toward low complexity.

The polypeptide is Cysteine-rich C-terminal protein 1 (CRCT1) (Homo sapiens (Human)).